The following is a 792-amino-acid chain: G-type lectin S-receptor-like serine/threonine-protein kinase At1g61440 (792 aa).

The signal sequence occupies residues 1-17 (MGKKRIVLLLFISFSYA). One can recognise a Bulb-type lectin domain in the interval 18–137 (EITKESPLSI…VTGRTLWESF (120 aa)). At 18-419 (EITKESPLSI…ELDVHKRKMT (402 aa)) the chain is on the extracellular side. N-linked (GlcNAc...) asparagine glycans are attached at residues asparagine 46, asparagine 127, and asparagine 229. Residues 271–307 (PANSCDIYGVCGPFGFCVISDPPKCKCFKGFVPKSIE) form the EGF-like; atypical domain. 2 disulfides stabilise this stretch: cysteine 275-cysteine 287 and cysteine 281-cysteine 295. N-linked (GlcNAc...) asparagine glycans are attached at residues asparagine 313, asparagine 329, and asparagine 368. The region spanning 326–408 (CQGNSTGKDA…GEILSIRLAH (83 aa)) is the PAN domain. 2 cysteine pairs are disulfide-bonded: cysteine 361-cysteine 382 and cysteine 365-cysteine 371. Residues 420 to 440 (IVASTVSLTLFVILGFATFGF) form a helical membrane-spanning segment. At 441 to 792 (WRNRVKHHDA…EMTESVILGR (352 aa)) the chain is on the cytoplasmic side. Residues 478 to 763 (FSLSNKLGHG…DLPLPKQPTF (286 aa)) enclose the Protein kinase domain. ATP-binding positions include 484–492 (LGHGGFGSV) and lysine 506. Residues serine 512 and serine 527 each carry the phosphoserine modification. The interval 567–584 (RKRLELDWPKRFDIIQGI) is caM-binding. The active-site Proton acceptor is the aspartate 603. 2 positions are modified to phosphoserine: serine 607 and serine 620. At threonine 637 the chain carries Phosphothreonine. Phosphoserine is present on residues serine 680 and serine 774.

It belongs to the protein kinase superfamily. Ser/Thr protein kinase family.

The protein resides in the cell membrane. It carries out the reaction L-seryl-[protein] + ATP = O-phospho-L-seryl-[protein] + ADP + H(+). The catalysed reaction is L-threonyl-[protein] + ATP = O-phospho-L-threonyl-[protein] + ADP + H(+). This Arabidopsis thaliana (Mouse-ear cress) protein is G-type lectin S-receptor-like serine/threonine-protein kinase At1g61440.